The following is a 351-amino-acid chain: MSTLLIDLQGQELSQEEVELLSHPLVAGLILFTRNFHDRAQMQALIQSIRQRVKKPLLITVDQEGGRVQRFREGFTQLPAMQAFACLIDDPVQQTNMAQQAGWQMAAEMTALGIDLSFAPVLDLGHQCQAIGDRSFHSQAEMTLNLASAFIDGMHQVGMAATGKHFPGHGHVIADSHLETPYDERPKQQIFAQDIQPFQQLIQQNMLNAIMPAHVIYSQCDPQPASGSAYWLKQVLRQQLGFNGAIFSDDLGMKGAGFMGNFVQRCEQSLQAGCDLLLLCNEREGVIQVLDNLKLSETEPHFALRQQRLQQLFKRKTIRWSELEATSRWLENRKILTALQQRWLDNKANKH.

Substrate contacts are provided by residues D62, R70, R134, and 164–165; that span reads KH. The Proton donor/acceptor role is filled by H177. The active-site Nucleophile is the D249.

The protein belongs to the glycosyl hydrolase 3 family. NagZ subfamily. Monomer.

The protein resides in the cytoplasm. It catalyses the reaction Hydrolysis of terminal non-reducing N-acetyl-D-hexosamine residues in N-acetyl-beta-D-hexosaminides.. It participates in cell wall biogenesis; peptidoglycan recycling. Its function is as follows. Plays a role in peptidoglycan recycling by cleaving the terminal beta-1,4-linked N-acetylglucosamine (GlcNAc) from peptide-linked peptidoglycan fragments, giving rise to free GlcNAc, anhydro-N-acetylmuramic acid and anhydro-N-acetylmuramic acid-linked peptides. The protein is Beta-hexosaminidase of Pasteurella multocida (strain Pm70).